The primary structure comprises 285 residues: Polyamine aminopropyltransferase (285 aa).

The PABS domain maps to 5 to 241; it reads DNWYIEHFQP…GWWSVTMASK (237 aa). Glutamine 35 contributes to the S-methyl-5'-thioadenosine binding site. Spermidine contacts are provided by histidine 66 and aspartate 90. S-methyl-5'-thioadenosine-binding positions include aspartate 110 and 141-142; that span reads DG. Catalysis depends on aspartate 160, which acts as the Proton acceptor. Residue 160-163 coordinates spermidine; that stretch reads DSTD. Proline 167 is a binding site for S-methyl-5'-thioadenosine.

Belongs to the spermidine/spermine synthase family. Homodimer or homotetramer.

It is found in the cytoplasm. The enzyme catalyses S-adenosyl 3-(methylsulfanyl)propylamine + putrescine = S-methyl-5'-thioadenosine + spermidine + H(+). It functions in the pathway amine and polyamine biosynthesis; spermidine biosynthesis; spermidine from putrescine: step 1/1. In terms of biological role, catalyzes the irreversible transfer of a propylamine group from the amino donor S-adenosylmethioninamine (decarboxy-AdoMet) to putrescine (1,4-diaminobutane) to yield spermidine. In Xanthomonas euvesicatoria pv. vesicatoria (strain 85-10) (Xanthomonas campestris pv. vesicatoria), this protein is Polyamine aminopropyltransferase.